A 262-amino-acid polypeptide reads, in one-letter code: uncharacterized protein (262 aa).

Helical transmembrane passes span 21–41 (ILIT…VGKF), 94–114 (IVSN…LAYL), 139–159 (LLIL…GVNL), 164–184 (LIAV…AVVV), 205–225 (IVIL…LEPI), and 240–260 (LLAA…SMLF).

The protein resides in the cell membrane. This is an uncharacterized protein from Methanocaldococcus jannaschii (strain ATCC 43067 / DSM 2661 / JAL-1 / JCM 10045 / NBRC 100440) (Methanococcus jannaschii).